The following is a 606-amino-acid chain: Atypical protein kinase C (606 aa).

The PB1 domain maps to 30 to 113; it reads SITVKTAYNG…SQLVIHVFPN (84 aa). The Phorbol-ester/DAG-type zinc finger occupies 145–195; that stretch reads GHIFQAKRFNRRAFCAYCQDRIWGLGRQGFKCIQCKLLVHKKCHKLVQKHC. One can recognise a Protein kinase domain in the interval 264 to 532; the sequence is FELIRVIGRG…FMDIVSHPFF (269 aa). ATP is bound by residues 270–278 and Lys293; that span reads IGRGSYAKV. Asp388 functions as the Proton acceptor in the catalytic mechanism. The 72-residue stretch at 533–604 folds into the AGC-kinase C-terminal domain; the sequence is KNMDWELLER…VNPLLMSLED (72 aa).

This sequence belongs to the protein kinase superfamily. AGC Ser/Thr protein kinase family. PKC subfamily. As to quaternary structure, interacts with baz; the interaction is required for apical localization of aPKC in neuroblasts and epithelial cells. Interacts with Dap160; the interaction promotes aPKC apical localization and kinase activity. Interacts with and phosphorylates l(2)gl and yrt. Interacts with crb and ref(2)P. Forms a complex with baz, fz and Patj. Expressed in the testis. In spermatid cysts, localizes near the tips of spermatid flagellar axonemes (at protein level). Detectable in freshly laid eggs before onset of zygotic transcription so is deposited in the egg during oogenesis. At the cellular blastoderm stage, present in all cells except the pole cells. During gastrulation, strongly expressed in tissues undergoing morphogenetic movements such as invaginating mesoderm, proctodeum and cephalic furrow. Strongly expressed in neuroblasts.

It is found in the cytoplasm. It localises to the cell cortex. The protein localises to the apicolateral cell membrane. It carries out the reaction L-seryl-[protein] + ATP = O-phospho-L-seryl-[protein] + ADP + H(+). The enzyme catalyses L-threonyl-[protein] + ATP = O-phospho-L-threonyl-[protein] + ADP + H(+). Functionally, serine/threonine protein kinase which is required for apico-basal cell polarity in the germ line as well as in epithelial and neural precursor cells, for epithelial planar cell polarity and for cell proliferation. During oocyte development, required for the posterior translocation of oocyte specification factors and for the posterior establishment of the microtubule organizing center within the presumptive oocyte. Phosphorylates l(2)gl which restricts l(2)gl activity to the oocyte posterior and regulates posterior enrichment of par-1, leading to establishment of correct oocyte polarity. Essential for apical localization of l(2)gl and par-6 in neuroblasts and for exclusion of mira from the apical cortex. Phosphorylates baz which is required for targeting of baz to the postsynaptic region where it is involved in actin organization, and for apical exclusion of baz which is necessary for establishment of the apical/lateral border in epithelial cells. Phosphorylates yrt which prevents its premature apical localization and is necessary for correct epithelial cell polarization. Required for the establishment of mitotic spindle orientation during symmetric division of epithelial cells and for apical exclusion of raps/Pins. Involved in symmetric adherens junction positioning during embryogenesis. Required for polarization of the spermatid cyst which is necessary for sperm differentiation. Required for stimulation of the Toll signaling pathway which activates Dif and dl and plays a role in innate immunity. Plays a role in memory enhancement. The chain is Atypical protein kinase C from Drosophila melanogaster (Fruit fly).